The following is a 244-amino-acid chain: Ribosomal RNA large subunit methyltransferase E (244 aa).

5 residues coordinate S-adenosyl-L-methionine: Gly-81, Trp-83, Asp-109, Asp-125, and Asp-149. Lys-189 serves as the catalytic Proton acceptor.

It belongs to the class I-like SAM-binding methyltransferase superfamily. RNA methyltransferase RlmE family.

It localises to the cytoplasm. It catalyses the reaction uridine(2552) in 23S rRNA + S-adenosyl-L-methionine = 2'-O-methyluridine(2552) in 23S rRNA + S-adenosyl-L-homocysteine + H(+). Functionally, specifically methylates the uridine in position 2552 of 23S rRNA at the 2'-O position of the ribose in the fully assembled 50S ribosomal subunit. This Cereibacter sphaeroides (strain ATCC 17029 / ATH 2.4.9) (Rhodobacter sphaeroides) protein is Ribosomal RNA large subunit methyltransferase E.